The following is a 325-amino-acid chain: Ribonucleoside-diphosphate reductase small chain (325 aa).

Fe cation-binding residues include D76, E107, and H110. Y114 is an active-site residue. The Fe cation site is built by E170, E204, and H207.

This sequence belongs to the ribonucleoside diphosphate reductase small chain family. Heterodimer of a large and a small subunit. It depends on Fe cation as a cofactor.

The enzyme catalyses a 2'-deoxyribonucleoside 5'-diphosphate + [thioredoxin]-disulfide + H2O = a ribonucleoside 5'-diphosphate + [thioredoxin]-dithiol. Provides the precursors necessary for DNA synthesis. Catalyzes the biosynthesis of deoxyribonucleotides from the corresponding ribonucleotides. This is Ribonucleoside-diphosphate reductase small chain from Encephalitozoon cuniculi (strain GB-M1) (Microsporidian parasite).